A 120-amino-acid chain; its full sequence is Alanine racemase (120 aa).

Catalysis depends on Y24, which acts as the Proton acceptor; specific for L-alanine.

Belongs to the alanine racemase family. In terms of assembly, homodimer. It depends on pyridoxal 5'-phosphate as a cofactor.

It catalyses the reaction L-alanine = D-alanine. Its function is as follows. Highly specific to D- and L-alanine and does not catalyze the racemization of other amino acids. This chain is Alanine racemase, found in Penaeus monodon (Giant tiger prawn).